The primary structure comprises 478 residues: Zinc metalloproteinase/disintegrin (478 aa).

The signal sequence occupies residues 1–20 (MIQVLLVTICLAVFPYQGSS). Positions 21–194 (KTLKSGNVND…KASQLNLTPE (174 aa)) are excised as a propeptide. Gln-195 is subject to Pyrrolidone carboxylic acid. Residues 201–397 (RYIELVIVAD…RNPQCILNQP (197 aa)) form the Peptidase M12B domain. Glu-204 and Asp-288 together coordinate Ca(2+). Intrachain disulfides connect Cys-312–Cys-392, Cys-352–Cys-376, and Cys-354–Cys-359. His-337 is a binding site for Zn(2+). Residue Glu-338 is part of the active site. Positions 341 and 347 each coordinate Zn(2+). Cys-392 and Asn-395 together coordinate Ca(2+). The propeptide occupies 398–413 (LRTDTVSTPVSGNELL). One can recognise a Disintegrin domain in the interval 405–478 (TPVSGNELLQ…SDCPRNPYKD (74 aa)). Cystine bridges form between Cys-420/Cys-443, Cys-434/Cys-440, Cys-439/Cys-464, and Cys-452/Cys-471. The Cell attachment site; atypical (VGD) signature appears at 456–458 (VGD).

Belongs to the venom metalloproteinase (M12B) family. P-II subfamily. P-IIe sub-subfamily. In terms of assembly, monomer (metalloproteinase). Heterodimer; disulfide-linked (disintegrin). Requires Zn(2+) as cofactor. In terms of tissue distribution, expressed by the venom gland.

Its subcellular location is the secreted. Fibrinolytic and caseinolytic activities are inhibited by Cd(2+), Cu(2+) and Co(2+) ions. Not inhibited by Mg(2+), Ca(2+) and Ba(2+). Also inhibited by EDTA, EGTA and 1,10-phenanthroline. Its function is as follows. Fibrinolytic and fibrinogenolytic metalloproteinase that hydrolyzes the Aalpha-chain and more slowly the Bbeta-chain of fibrin and fibrinogen. Its fibrinolytic activity is direct, without any plasminogen activation. Also hydrolyzes casein and B-chain of oxidized insulin. Inhibits ADP-induced and collagen-induced platelet aggregation. Shows low hemorrhagic activity. Cleaves the plasma proteinase inhibitors alpha(2)-macroglobulin (A2M) and pregnancy zone protein (PZP), and is inhibited by them. The metalloprotease has no strict P1-P1' specificity requirement. Hydrolysis at sites with a Pro residue at P1 is observed with bradykinin, substance P, PZP and alpha chain fibrinogen (FGA). In terms of biological role, poor inhibitor of platelet aggregation. The disintegrin inhibits the adhesion of the alpha-4/beta-1 (ITGA4/ITGB1) integrin to VCAM-1. Inhibition on alpha-2b/beta-3 (ITGA2B/ITGB3) is low. In Macrovipera lebetinus (Levantine viper), this protein is Zinc metalloproteinase/disintegrin.